Consider the following 448-residue polypeptide: Ribosomal protein uS12 methylthiotransferase RimO (448 aa).

In terms of domain architecture, MTTase N-terminal spans 13–128 (KSFFITTLGC…AGEILRKNFP (116 aa)). Cysteine 22, cysteine 58, cysteine 91, cysteine 167, cysteine 171, and cysteine 174 together coordinate [4Fe-4S] cluster. The Radical SAM core domain occupies 153–382 (NYSKPYSYVK…AYLGTLKTIH (230 aa)). A TRAM domain is found at 383 to 448 (QNRIGKIYPC…ELDMSGTWVD (66 aa)).

This sequence belongs to the methylthiotransferase family. RimO subfamily. Requires [4Fe-4S] cluster as cofactor.

It is found in the cytoplasm. The enzyme catalyses L-aspartate(89)-[ribosomal protein uS12]-hydrogen + (sulfur carrier)-SH + AH2 + 2 S-adenosyl-L-methionine = 3-methylsulfanyl-L-aspartate(89)-[ribosomal protein uS12]-hydrogen + (sulfur carrier)-H + 5'-deoxyadenosine + L-methionine + A + S-adenosyl-L-homocysteine + 2 H(+). Functionally, catalyzes the methylthiolation of an aspartic acid residue of ribosomal protein uS12. In Leptospira biflexa serovar Patoc (strain Patoc 1 / Ames), this protein is Ribosomal protein uS12 methylthiotransferase RimO.